Here is a 913-residue protein sequence, read N- to C-terminus: DNA mismatch repair protein MutS (913 aa).

720–727 (GPNASGKS) serves as a coordination point for ATP.

This sequence belongs to the DNA mismatch repair MutS family.

In terms of biological role, this protein is involved in the repair of mismatches in DNA. It is possible that it carries out the mismatch recognition step. This protein has a weak ATPase activity. This chain is DNA mismatch repair protein MutS, found in Prochlorococcus marinus (strain MIT 9312).